Here is a 161-residue protein sequence, read N- to C-terminus: MIITIGGLAGTGTTTVARILSERMGIPCVSAGDVFRQMAAERELDILEFSRIAEENPEIDIEIDRRQARLADEHEDLILEGRLSAHFARADLKVLLIAPFDVRAQRISVRESKDIETVREEIRIRERSEAQRYREIHGIDVDDLEVYDIVINTNRFDAEAS.

An ATP-binding site is contributed by 7-15; that stretch reads GLAGTGTTT.

This sequence belongs to the cytidylate kinase family. Type 2 subfamily.

Its subcellular location is the cytoplasm. It carries out the reaction CMP + ATP = CDP + ADP. The catalysed reaction is dCMP + ATP = dCDP + ADP. The sequence is that of Cytidylate kinase (cmk) from Methanothermobacter thermautotrophicus (strain ATCC 29096 / DSM 1053 / JCM 10044 / NBRC 100330 / Delta H) (Methanobacterium thermoautotrophicum).